The following is a 626-amino-acid chain: Elongation factor 4 (626 aa).

One can recognise a tr-type G domain in the interval 14 to 195; that stretch reads SVIRNFCIIA…QIVMDVPAPH (182 aa). Residues 26–31 and 142–145 each bind GTP; these read DHGKST and NKID. The disordered stretch occupies residues 603–626; sequence LSTGEDSNDRDTKDKIRAAQKTEG. Positions 609–626 are enriched in basic and acidic residues; the sequence is SNDRDTKDKIRAAQKTEG.

The protein belongs to the TRAFAC class translation factor GTPase superfamily. Classic translation factor GTPase family. LepA subfamily.

It localises to the cell membrane. It catalyses the reaction GTP + H2O = GDP + phosphate + H(+). In terms of biological role, required for accurate and efficient protein synthesis under certain stress conditions. May act as a fidelity factor of the translation reaction, by catalyzing a one-codon backward translocation of tRNAs on improperly translocated ribosomes. Back-translocation proceeds from a post-translocation (POST) complex to a pre-translocation (PRE) complex, thus giving elongation factor G a second chance to translocate the tRNAs correctly. Binds to ribosomes in a GTP-dependent manner. The polypeptide is Elongation factor 4 (Bifidobacterium longum subsp. infantis (strain ATCC 15697 / DSM 20088 / JCM 1222 / NCTC 11817 / S12)).